The primary structure comprises 538 residues: Metal transporter Nramp5 (538 aa).

12 helical membrane-spanning segments follow: residues 44–64, 77–97, 118–138, 140–160, 181–201, 227–247, 264–284, 324–346, 365–385, 391–411, 427–447, and 467–487; these read FLAHVGPGFMVSLAYLDPGNL, ELLWVILIGLIFALIIQSLAA, FVKIFLWLLAELAVIAADIPE, IGTAFAFNILFHIPVWVGVLI, FLISMLVFVMAACFFGELSIV, IALLGALVMPHNLFLHSALVL, FFLYESGFALFVALLINIAVV, SAIVYGVALLASGQSSTITGTYA, NLMTRTIAIAPSLIVSIIGGS, LIIIASMILSFELPFALIPLL, IYIIVFSWFLGLLIIGINMYF, and VLVGAAVFPFMLVYIVAVVYL. A disordered region spans residues 518 to 538; the sequence is AVDDDEPLPYRDDLADIPLPR.

It belongs to the NRAMP (TC 2.A.55) family.

Its subcellular location is the membrane. Functionally, probable metal transporter. The protein is Metal transporter Nramp5 (NRAMP5) of Oryza sativa subsp. japonica (Rice).